A 431-amino-acid chain; its full sequence is Adenylosuccinate lyase (431 aa).

N(6)-(1,2-dicarboxyethyl)-AMP-binding positions include 4-5 (RY), 67-69 (RHD), and 93-94 (TS). The active-site Proton donor/acceptor is His-141. Gln-212 provides a ligand contact to N(6)-(1,2-dicarboxyethyl)-AMP. Ser-262 (proton donor/acceptor) is an active-site residue. N(6)-(1,2-dicarboxyethyl)-AMP contacts are provided by residues Ser-263, 268 to 270 (KRN), Asn-276, and 307 to 311 (SAERI).

This sequence belongs to the lyase 1 family. Adenylosuccinate lyase subfamily. Homodimer and homotetramer. Residues from neighboring subunits contribute catalytic and substrate-binding residues to each active site.

The enzyme catalyses N(6)-(1,2-dicarboxyethyl)-AMP = fumarate + AMP. It catalyses the reaction (2S)-2-[5-amino-1-(5-phospho-beta-D-ribosyl)imidazole-4-carboxamido]succinate = 5-amino-1-(5-phospho-beta-D-ribosyl)imidazole-4-carboxamide + fumarate. It participates in purine metabolism; AMP biosynthesis via de novo pathway; AMP from IMP: step 2/2. It functions in the pathway purine metabolism; IMP biosynthesis via de novo pathway; 5-amino-1-(5-phospho-D-ribosyl)imidazole-4-carboxamide from 5-amino-1-(5-phospho-D-ribosyl)imidazole-4-carboxylate: step 2/2. Catalyzes two reactions in de novo purine nucleotide biosynthesis. Catalyzes the breakdown of 5-aminoimidazole- (N-succinylocarboxamide) ribotide (SAICAR or 2-[5-amino-1-(5-phospho-beta-D-ribosyl)imidazole-4-carboxamido]succinate) to 5-aminoimidazole-4-carboxamide ribotide (AICAR or 5-amino-1-(5-phospho-beta-D-ribosyl)imidazole-4-carboxamide) and fumarate, and of adenylosuccinate (ADS or N(6)-(1,2-dicarboxyethyl)-AMP) to adenosine monophosphate (AMP) and fumarate. This Staphylococcus epidermidis (strain ATCC 35984 / DSM 28319 / BCRC 17069 / CCUG 31568 / BM 3577 / RP62A) protein is Adenylosuccinate lyase (purB).